Consider the following 95-residue polypeptide: UPF0125 protein BUsg_244 (95 aa).

It belongs to the UPF0125 (RnfH) family.

The protein is UPF0125 protein BUsg_244 of Buchnera aphidicola subsp. Schizaphis graminum (strain Sg).